We begin with the raw amino-acid sequence, 856 residues long: MAPKQDTPFRSADMSMVQLYISNEIGREVCNALGELGLVHFRDLNSELSAFQRAFTQDIRRLDNVERQLRYFHSQMEKAGIPLRKFDPDVDILTPPTTTEIDELAERAQTLEQRVSSLNESYETLKKREVELTEWRWVLREAGGFFDRAHGNVEEIRASTDNDDAPLLQDVEQHNTAADVERSFSGMNIGFVAGVIGRDRVDAFERILWRTLRGNLYMNQAEIPEPLIDPTINEPVLKNVFVIFAHGKEILAKIRRISESMGAEVYNVDEHSDLRRDQVHEVNARLEDVQNVLRNTQQTLEAELAQISQSLSAWMITISKEKAVYNTLNLFSYDRARRTLIAEGWCPTNDLPLIRSTLQDVNNRAGLSVPSIINEIRTNKTPPTYLKTNKFTEAFQTIVNAYGTATYQEVNPAIPVIVTFPFLFAVMFGDFGHALIMLCAALAMIYWEKPLKKVTFELFAMVFYGRYIVLVMAVFSVYTGLIYNDVFSKSMTLFDSQWKWVVPENFKEGMTVKAVLREPNGYRYPFGLDWRWHGTENELLFINSYKMKMAIILGWAHMTYSLCFSYINARHFKRPIDIWGNFVPGMIFFQSIFGYLVLCIIYKWSVDWFGTGRQPPGLLNMLIYMFLQPGTLDGGVELYPGQATVQVILLLLAVIQVPILLFLKPFYLRWENNRARAKGYRGIGERSRVSALDEDDEEDPSNGDDYEGAAMLTHDEHGDGEHEEFEFGEVMIHQVIHTIEFCLNSVSHTASYLRLWALSLAHQQLSAVLWSMTMAKALESKGLGGAIFLVVAFAMFFVLSVIILIIMEGVSAMLHSLRLAWVESFSKFAEFGGWPFTPFSFKQQLEESEELKEYIG.

At 1–409 the chain is on the cytoplasmic side; it reads MAPKQDTPFR…NAYGTATYQE (409 aa). Residues 410-428 traverse the membrane as a helical segment; sequence VNPAIPVIVTFPFLFAVMF. The Vacuolar portion of the chain corresponds to 429 to 430; that stretch reads GD. The chain crosses the membrane as a helical span at residues 431-447; the sequence is FGHALIMLCAALAMIYW. Over 448–460 the chain is Cytoplasmic; the sequence is EKPLKKVTFELFA. Residues 461–490 form a helical membrane-spanning segment; the sequence is MVFYGRYIVLVMAVFSVYTGLIYNDVFSKS. At 491 to 544 the chain is on the vacuolar side; that stretch reads MTLFDSQWKWVVPENFKEGMTVKAVLREPNGYRYPFGLDWRWHGTENELLFINS. A helical transmembrane segment spans residues 545–564; that stretch reads YKMKMAIILGWAHMTYSLCF. At 565–582 the chain is on the cytoplasmic side; it reads SYINARHFKRPIDIWGNF. Residues 583–603 form a helical membrane-spanning segment; it reads VPGMIFFQSIFGYLVLCIIYK. Residues 604–648 are Vacuolar-facing; sequence WSVDWFGTGRQPPGLLNMLIYMFLQPGTLDGGVELYPGQATVQVI. Residues 649-668 traverse the membrane as a helical segment; sequence LLLLAVIQVPILLFLKPFYL. The Cytoplasmic portion of the chain corresponds to 669–738; it reads RWENNRARAK…EVMIHQVIHT (70 aa). The disordered stretch occupies residues 689–710; it reads VSALDEDDEEDPSNGDDYEGAA. The span at 692-707 shows a compositional bias: acidic residues; the sequence is LDEDDEEDPSNGDDYE. Residues 739–763 form a helical membrane-spanning segment; sequence IEFCLNSVSHTASYLRLWALSLAHQ. Over 764-784 the chain is Vacuolar; that stretch reads QLSAVLWSMTMAKALESKGLG. The helical transmembrane segment at 785-823 threads the bilayer; it reads GAIFLVVAFAMFFVLSVIILIIMEGVSAMLHSLRLAWVE. The Cytoplasmic segment spans residues 824 to 856; sequence SFSKFAEFGGWPFTPFSFKQQLEESEELKEYIG.

This sequence belongs to the V-ATPase 116 kDa subunit family. V-ATPase is a heteromultimeric enzyme composed of a peripheral catalytic V1 complex (components A to H) attached to an integral membrane V0 proton pore complex (components: a, c, c', c'', d, e, f and VOA1).

Its subcellular location is the vacuole membrane. Its function is as follows. Subunit of the V0 complex of vacuolar(H+)-ATPase (V-ATPase), a multisubunit enzyme composed of a peripheral complex (V1) that hydrolyzes ATP and a membrane integral complex (V0) that translocates protons. V-ATPase is responsible for acidifying and maintaining the pH of intracellular compartments. In Neurospora crassa (strain ATCC 24698 / 74-OR23-1A / CBS 708.71 / DSM 1257 / FGSC 987), this protein is V-type proton ATPase subunit a (vph-1).